A 115-amino-acid chain; its full sequence is Large ribosomal subunit protein bL20c (115 aa).

The protein belongs to the bacterial ribosomal protein bL20 family.

The protein resides in the plastid. The protein localises to the chloroplast. Binds directly to 23S ribosomal RNA and is necessary for the in vitro assembly process of the 50S ribosomal subunit. It is not involved in the protein synthesizing functions of that subunit. The chain is Large ribosomal subunit protein bL20c from Gnetum parvifolium (Small-leaved jointfir).